The following is a 545-amino-acid chain: Glucans biosynthesis protein G (545 aa).

Positions 1–34 (MVSLLRCQSFKPSSSLICSLALSAAFALSSSAFA) are cleaved as a signal peptide. The disordered stretch occupies residues 38–60 (KPAENKPATPVVSPPKATAQPAN).

It belongs to the OpgD/OpgG family.

Its subcellular location is the periplasm. It participates in glycan metabolism; osmoregulated periplasmic glucan (OPG) biosynthesis. In terms of biological role, involved in the biosynthesis of osmoregulated periplasmic glucans (OPGs). In Shewanella sp. (strain ANA-3), this protein is Glucans biosynthesis protein G.